The sequence spans 393 residues: Ethanol acetyltransferase 1 (393 aa).

The N-terminal 25 residues, 1–25 (MHFTRTLFNQVASKASRQLPVQKRV), are a transit peptide targeting the mitochondrion. In terms of domain architecture, AB hydrolase-1 spans 49–151 (PIVFVHGIFG…GVIIDNSPIE (103 aa)). Active-site charge relay system residues include S122, D146, and H296. Basic and acidic residues predominate over residues 343–354 (AKHAQQIEELRK). The segment at 343–393 (AKHAQQIEELRKVTSTSESSIPHSTQSSEQAFTENIDLARQEREHQKSVSA) is disordered. Over residues 355-375 (VTSTSESSIPHSTQSSEQAFT) the composition is skewed to polar residues. Positions 379–393 (DLARQEREHQKSVSA) are enriched in basic and acidic residues.

Belongs to the AB hydrolase superfamily.

It localises to the mitochondrion. It catalyses the reaction ethanol + acetyl-CoA = ethyl acetate + CoA. The enzyme catalyses acetyl-CoA + H2O = acetate + CoA + H(+). The catalysed reaction is ethyl acetate + H2O = ethanol + acetate + H(+). Alcohol acetyltransferase that catalyzes the synthesis of ethyl acetate from ethanol and acetyl-CoA. Can also function as a thioesterase by hydrolyzing acetyl-CoA in the absence of ethanol, as well as esterase hydrolyzing ethyl acetate. This chain is Ethanol acetyltransferase 1 (EAT1), found in Wickerhamomyces ciferrii (strain ATCC 14091 / BCRC 22168 / CBS 111 / JCM 3599 / NBRC 0793 / NRRL Y-1031 F-60-10) (Yeast).